A 145-amino-acid chain; its full sequence is MDVLVINGPNLNLLGTRQPQFYGHKTLADINNDLLKIAKENNINIDFYQSNHEGQIIDKIQQTAAKIIIINPAAFTHTSVAIRDAFLAINKPFIEIHLSNIYNREEFRTKSFLSDIAYGCIFGFGPNGYTLALIEAINYINMKGE.

Residue Tyr22 is the Proton acceptor of the active site. Residues Asn71, His77, and Asp84 each coordinate substrate. The active-site Proton donor is the His97. Residues 98–99 (LS) and Arg108 contribute to the substrate site.

Belongs to the type-II 3-dehydroquinase family. Homododecamer.

The catalysed reaction is 3-dehydroquinate = 3-dehydroshikimate + H2O. It participates in metabolic intermediate biosynthesis; chorismate biosynthesis; chorismate from D-erythrose 4-phosphate and phosphoenolpyruvate: step 3/7. Catalyzes a trans-dehydration via an enolate intermediate. This is 3-dehydroquinate dehydratase from Francisella tularensis subsp. tularensis (strain WY96-3418).